Here is a 277-residue protein sequence, read N- to C-terminus: Caspase-3 (277 aa).

The residue at position 1 (methionine 1) is an N-acetylmethionine. 2 consecutive propeptides follow at residues 1–9 (MENNETSVD) and 10–28 (AKSIKNLETQTIHGSKSMD). Position 11 is an N6-acetyllysine (lysine 11). The residue at position 26 (serine 26) is a Phosphoserine. Active-site residues include histidine 121 and cysteine 163. Position 163 is an S-nitrosocysteine; in inhibited form (cysteine 163).

It belongs to the peptidase C14A family. In terms of assembly, heterotetramer that consists of two anti-parallel arranged heterodimers, each one formed by a 17 kDa (p17) and a 12 kDa (p12) subunit. Interacts with BIRC6/bruce. Cleavage by granzyme B, caspase-6, caspase-8 and caspase-10 generates the two active subunits. Additional processing of the propeptides is likely due to the autocatalytic activity of the activated protease. Active heterodimers between the small subunit of caspase-7 protease and the large subunit of caspase-3 also occur and vice versa. Post-translationally, S-nitrosylated on its catalytic site cysteine in unstimulated cell lines and denitrosylated upon activation of the Fas apoptotic pathway, associated with an increase in intracellular caspase activity. Fas therefore activates caspase-3 not only by inducing the cleavage of the caspase zymogen to its active subunits, but also by stimulating the denitrosylation of its active site thiol. In terms of processing, ubiquitinated by BIRC6; this activity is inhibited by DIABLO/SMAC.

The protein resides in the cytoplasm. The enzyme catalyses Strict requirement for an Asp residue at positions P1 and P4. It has a preferred cleavage sequence of Asp-Xaa-Xaa-Asp-|- with a hydrophobic amino-acid residue at P2 and a hydrophilic amino-acid residue at P3, although Val or Ala are also accepted at this position.. Inhibited by BIRC6; following inhibition of BIRC6-caspase binding by DIABLO/SMAC, BIRC6 is subjected to caspase cleavage, leading to an increase in active caspases. Functionally, involved in the activation cascade of caspases responsible for apoptosis execution. At the onset of apoptosis, it proteolytically cleaves poly(ADP-ribose) polymerase PARP1 at a '216-Asp-|-Gly-217' bond. Cleaves and activates sterol regulatory element binding proteins (SREBPs) between the basic helix-loop-helix leucine zipper domain and the membrane attachment domain. Cleaves and activates caspase-6, -7 and -9 (CASP6, CASP7 and CASP9, respectively). Cleaves and inactivates interleukin-18 (IL18). Triggers cell adhesion in sympathetic neurons through RET cleavage. Cleaves IL-1 beta between an Asp and an Ala, releasing the mature cytokine which is involved in a variety of inflammatory processes. Cleaves and inhibits serine/threonine-protein kinase AKT1 in response to oxidative stress. Acts as an inhibitor of type I interferon production during virus-induced apoptosis by mediating cleavage of antiviral proteins CGAS, IRF3 and MAVS, thereby preventing cytokine overproduction. Also involved in pyroptosis by mediating cleavage and activation of gasdermin-E (GSDME). Cleaves XRCC4 and phospholipid scramblase proteins XKR4, XKR8 and XKR9, leading to promote phosphatidylserine exposure on apoptotic cell surface. Cleaves BIRC6 following inhibition of BIRC6-caspase binding by DIABLO/SMAC. In Oryctolagus cuniculus (Rabbit), this protein is Caspase-3 (CASP3).